The primary structure comprises 140 residues: Histone H2B (140 aa).

Residues 1 to 10 are compositionally biased toward basic and acidic residues; it reads MPPKAAEKKP. Residues 1–48 are disordered; sequence MPPKAAEKKPSTGGKAPAGKAPAEKKEAGKKTAAAASGEKKKRGKTRK. Residues Lys8 and Lys9 each carry the N6-acetyllysine; alternate modification. Residues Lys8 and Lys9 each participate in a glycyl lysine isopeptide (Lys-Gly) (interchain with G-Cter in SUMO); alternate cross-link. The segment covering 11-21 has biased composition (low complexity); sequence STGGKAPAGKA. The residue at position 15 (Lys15) is an N6-acetyllysine. Lys25 carries the post-translational modification N6-acetyllysine; alternate. Lys25 is covalently cross-linked (Glycyl lysine isopeptide (Lys-Gly) (interchain with G-Cter in SUMO); alternate). A Glycyl lysine isopeptide (Lys-Gly) (interchain with G-Cter in SUMO) cross-link involves residue Lys26. Lys134 is covalently cross-linked (Glycyl lysine isopeptide (Lys-Gly) (interchain with G-Cter in ubiquitin)).

The protein belongs to the histone H2B family. In terms of assembly, the nucleosome is a histone octamer containing two molecules each of H2A, H2B, H3 and H4 assembled in one H3-H4 heterotetramer and two H2A-H2B heterodimers. The octamer wraps approximately 147 bp of DNA. Monoubiquitinated by the ubc2-bre1 complex to form H2BK123ub1. H2BK123ub1 gives a specific tag for epigenetic transcriptional activation and is also prerequisite for H3K4me and H3K79me formation. H2BK123ub1 also modulates the formation of double-strand breaks during meiosis and is a prerequisite for DNA-damage checkpoint activation. Post-translationally, acetylated by gcn5 to form H2BK11ac and H2BK16ac. H2BK16ac can also be formed by esa1. Acetylation of N-terminal lysines and particularly formation of H2BK11acK16ac has a positive effect on transcription. In terms of processing, sumoylation to form H2BK6su or H2BK7su, and probably also H2BK16su or H2BK17su, occurs preferentially near the telomeres and represses gene transcription.

It is found in the nucleus. The protein localises to the chromosome. Its function is as follows. Core component of nucleosome. Nucleosomes wrap and compact DNA into chromatin, limiting DNA accessibility to the cellular machineries which require DNA as a template. Histones thereby play a central role in transcription regulation, DNA repair, DNA replication and chromosomal stability. DNA accessibility is regulated via a complex set of post-translational modifications of histones, also called histone code, and nucleosome remodeling. The chain is Histone H2B (htbA) from Emericella nidulans (strain FGSC A4 / ATCC 38163 / CBS 112.46 / NRRL 194 / M139) (Aspergillus nidulans).